Here is a 489-residue protein sequence, read N- to C-terminus: NADH-quinone oxidoreductase subunit N (489 aa).

A run of 14 helical transmembrane segments spans residues 6 to 26 (VLFI…AVML), 37 to 57 (VFYI…PASS), 66 to 86 (LLIV…GSLA), 105 to 125 (FYLL…AHHL), 127 to 147 (AIFI…GYAF), 159 to 179 (YMVL…LIYA), 204 to 224 (ITLL…KLSL), 239 to 259 (PAPV…AVLL), 271 to 291 (FFYS…NLLA), 299 to 319 (RLLG…LIAC), 329 to 349 (VALY…VVSL), 377 to 397 (SAMT…GFIG), 408 to 430 (FHLW…YYLR), and 452 to 472 (ALTT…LLGI).

The protein belongs to the complex I subunit 2 family. NDH-1 is composed of 14 different subunits. Subunits NuoA, H, J, K, L, M, N constitute the membrane sector of the complex.

The protein resides in the cell inner membrane. The catalysed reaction is a quinone + NADH + 5 H(+)(in) = a quinol + NAD(+) + 4 H(+)(out). In terms of biological role, NDH-1 shuttles electrons from NADH, via FMN and iron-sulfur (Fe-S) centers, to quinones in the respiratory chain. The immediate electron acceptor for the enzyme in this species is believed to be ubiquinone. Couples the redox reaction to proton translocation (for every two electrons transferred, four hydrogen ions are translocated across the cytoplasmic membrane), and thus conserves the redox energy in a proton gradient. The polypeptide is NADH-quinone oxidoreductase subunit N (Tolumonas auensis (strain DSM 9187 / NBRC 110442 / TA 4)).